Consider the following 226-residue polypeptide: Endonuclease V (226 aa).

Mg(2+)-binding residues include D43 and D109.

It belongs to the endonuclease V family. The cofactor is Mg(2+).

Its subcellular location is the cytoplasm. The catalysed reaction is Endonucleolytic cleavage at apurinic or apyrimidinic sites to products with a 5'-phosphate.. In terms of biological role, DNA repair enzyme involved in the repair of deaminated bases. Selectively cleaves double-stranded DNA at the second phosphodiester bond 3' to a deoxyinosine leaving behind the intact lesion on the nicked DNA. This is Endonuclease V from Kosmotoga olearia (strain ATCC BAA-1733 / DSM 21960 / TBF 19.5.1).